The sequence spans 268 residues: Embryonic abundant protein USP87 (268 aa).

Residues 1-22 (MEFAHLTVLSLFCLAFVGITAT) form the signal peptide. Tandem repeats lie at residues 50–55 (GKTNSL), 83–88 (GNTNSV), 101–106 (GVTDSI), 166–183 (YVVE…MCHR), and 202–222 (YVVS…VCHH). Residues 50 to 106 (GKTNSLPIKSEELKQYSTLFFEHDLHPRKNFILGNTNSVGSIIRPFTKSRQGVTDSI) form a 3 X 6 AA approximate repeats region. The BURP domain occupies 68–259 (LFFEHDLHPR…GNKAAAWVPN (192 aa)). Residues 166–222 (YVVEDVKKVGDNAVMCHRLNFEKVVFNCHQVRDTTAYVVSLVASDGTKTKALTVCHH) form a 2 X approximate repeats region. Asn259 carries N-linked (GlcNAc...) asparagine glycosylation.

As to expression, seed.

The protein is Embryonic abundant protein USP87 of Vicia faba (Broad bean).